A 373-amino-acid polypeptide reads, in one-letter code: Chaperone protein DnaJ (373 aa).

The region spanning 4-69 (SYYEILEITQ…EKRAIYDRYG (66 aa)) is the J domain. The CR-type zinc finger occupies 135–212 (GCKKNIDFTY…CKGLGYNESK (78 aa)). 8 residues coordinate Zn(2+): Cys148, Cys151, Cys164, Cys167, Cys186, Cys189, Cys200, and Cys203. CXXCXGXG motif repeat units lie at residues 148-155 (CKTCNGTG), 164-171 (CPKCQGRG), 186-193 (CPDCQGIG), and 200-207 (CSDCKGLG).

It belongs to the DnaJ family. Homodimer. Requires Zn(2+) as cofactor.

It is found in the cytoplasm. Functionally, participates actively in the response to hyperosmotic and heat shock by preventing the aggregation of stress-denatured proteins and by disaggregating proteins, also in an autonomous, DnaK-independent fashion. Unfolded proteins bind initially to DnaJ; upon interaction with the DnaJ-bound protein, DnaK hydrolyzes its bound ATP, resulting in the formation of a stable complex. GrpE releases ADP from DnaK; ATP binding to DnaK triggers the release of the substrate protein, thus completing the reaction cycle. Several rounds of ATP-dependent interactions between DnaJ, DnaK and GrpE are required for fully efficient folding. Also involved, together with DnaK and GrpE, in the DNA replication of plasmids through activation of initiation proteins. The protein is Chaperone protein DnaJ of Campylobacter jejuni (strain RM1221).